We begin with the raw amino-acid sequence, 338 residues long: 1-aminocyclopropane-1-carboxylate deaminase (338 aa).

Lys51 carries the N6-(pyridoxal phosphate)lysine modification. The Nucleophile role is filled by Ser78.

It belongs to the ACC deaminase/D-cysteine desulfhydrase family. Homotrimer. It depends on pyridoxal 5'-phosphate as a cofactor.

It carries out the reaction 1-aminocyclopropane-1-carboxylate + H2O = 2-oxobutanoate + NH4(+). Its function is as follows. Catalyzes a cyclopropane ring-opening reaction, the irreversible conversion of 1-aminocyclopropane-1-carboxylate (ACC) to ammonia and alpha-ketobutyrate. Allows growth on ACC as a nitrogen source. This chain is 1-aminocyclopropane-1-carboxylate deaminase, found in Pseudomonas fluorescens.